Reading from the N-terminus, the 72-residue chain is Mitochondrial import protein 2 (72 aa).

The tract at residues 1-22 (MAEVLDLEIDPISDGEDDTYSS) is disordered. Residues 1–34 (MAEVLDLEIDPISDGEDDTYSSELDDDLKDSIEQ) are Cytoplasmic-facing. The chain crosses the membrane as a helical span at residues 35 to 52 (LERVLCLVVFPLLGKFLG). The Mitochondrial intermembrane portion of the chain corresponds to 53-72 (RKFAFHAWARWLERRRLVSN).

It belongs to the MIM2 family. In terms of assembly, component of the mitochondrial outer import machinery (MIM) complex containing at least mim1 and mim2. Interacts with mim1. Interacts with mitophagy receptor atg43.

It localises to the mitochondrion outer membrane. Component of the mitochondrial outer import machinery (MIM) complex that mediates transport of proteins into mitochondrial compartments. Promotes the insertion of tom70 into the outer mitochondrial membrane. Promotes the insertion of atg43 into the outer mitochondrial membrane. Involved in import of the subset of proteins with multiple alpha-helical transmembrane segments. This chain is Mitochondrial import protein 2, found in Schizosaccharomyces pombe (strain 972 / ATCC 24843) (Fission yeast).